Consider the following 279-residue polypeptide: Arabinooligosaccharides transport system permease protein AraQ (279 aa).

The next 6 helical transmembrane spans lie at 8 to 28 (ILSW…VFPL), 79 to 99 (VWIS…VGYA), 110 to 130 (FFFL…MLPL), 140 to 160 (VNTY…VFFF), 184 to 204 (GIFF…MAIL), and 245 to 265 (ILLA…IFFQ). Residues 75–264 (FGNSVWISIV…VPIVILFIFF (190 aa)) enclose the ABC transmembrane type-1 domain.

This sequence belongs to the binding-protein-dependent transport system permease family. MalFG subfamily. As to quaternary structure, the complex is composed of two ATP-binding proteins (MsmX), two transmembrane proteins (AraP and AraQ) and a solute-binding protein (AraN).

The protein resides in the cell membrane. In terms of biological role, part of the ABC transporter complex AraNPQ involved in the uptake of arabinooligosaccharides. Responsible for the translocation of the substrate across the membrane. The sequence is that of Arabinooligosaccharides transport system permease protein AraQ (araQ) from Halalkalibacterium halodurans (strain ATCC BAA-125 / DSM 18197 / FERM 7344 / JCM 9153 / C-125) (Bacillus halodurans).